The sequence spans 294 residues: ATP phosphoribosyltransferase (294 aa).

It belongs to the ATP phosphoribosyltransferase family. Long subfamily. The cofactor is Mg(2+).

The protein localises to the cytoplasm. It catalyses the reaction 1-(5-phospho-beta-D-ribosyl)-ATP + diphosphate = 5-phospho-alpha-D-ribose 1-diphosphate + ATP. The protein operates within amino-acid biosynthesis; L-histidine biosynthesis; L-histidine from 5-phospho-alpha-D-ribose 1-diphosphate: step 1/9. Feedback inhibited by histidine. Its function is as follows. Catalyzes the condensation of ATP and 5-phosphoribose 1-diphosphate to form N'-(5'-phosphoribosyl)-ATP (PR-ATP). Has a crucial role in the pathway because the rate of histidine biosynthesis seems to be controlled primarily by regulation of HisG enzymatic activity. This is ATP phosphoribosyltransferase from Prosthecochloris aestuarii (strain DSM 271 / SK 413).